We begin with the raw amino-acid sequence, 324 residues long: Glyoxylate/hydroxypyruvate reductase B (324 aa).

Active-site residues include Arg237 and Glu266. Residue His285 is the Proton donor of the active site.

Belongs to the D-isomer specific 2-hydroxyacid dehydrogenase family. GhrB subfamily. Homodimer.

The protein resides in the cytoplasm. The catalysed reaction is glycolate + NADP(+) = glyoxylate + NADPH + H(+). It catalyses the reaction (R)-glycerate + NAD(+) = 3-hydroxypyruvate + NADH + H(+). It carries out the reaction (R)-glycerate + NADP(+) = 3-hydroxypyruvate + NADPH + H(+). Functionally, catalyzes the NADPH-dependent reduction of glyoxylate and hydroxypyruvate into glycolate and glycerate, respectively. This chain is Glyoxylate/hydroxypyruvate reductase B, found in Salmonella choleraesuis (strain SC-B67).